The chain runs to 577 residues: Outer spore wall assembly protein SHE10 (577 aa).

The signal sequence occupies residues 1–23; sequence MGKLIKLITTLTVLVSLLQYCCE. Coiled coils occupy residues 379-416 and 513-561; these read NETR…ENVE and ILRS…EEDV. Positions 525-545 are enriched in basic and acidic residues; that stretch reads RERKERERKEREKAAAEEFQR. Residues 525-577 form a disordered region; it reads RERKERERKEREKAAAEEFQRQQELLLQQEEEDEEDVSYTSTSTITTTTTMTL. The span at 562–577 shows a compositional bias: low complexity; that stretch reads SYTSTSTITTTTTMTL.

Belongs to the SHE10 family. Component of the mitochondria-localized RNase mitochondrial RNA-processing (RNase MRP) composed of one single RNA encoded by the NME1 gene and at least 31 proteins. Absent in the nucleus-localized RNase MRP (NuMRP).

Its subcellular location is the mitochondrion. Functionally, involved in spore wall assembly. May be a component of the mitochondrial RNase MRP (MtMRP), a ribonucleoprotein endoribonuclease involved in the cleaving RNA transcripts to generate primers for DNA replication in mitochondria. The polypeptide is Outer spore wall assembly protein SHE10 (Saccharomyces cerevisiae (strain JAY291) (Baker's yeast)).